Consider the following 282-residue polypeptide: Glutamate--LysW ligase ArgX (282 aa).

ATP contacts are provided by residues lysine 87, lysine 127, 131-137, and 167-178; these read GSWGRLV and QEYIQYKGRDIR. The 187-residue stretch at 91-277 folds into the ATP-grasp domain; sequence YSKLYREGIP…VAQKLVEYIK (187 aa). Arginine 192 serves as a coordination point for substrate. Residue asparagine 202 participates in ATP binding. 203 to 204 provides a ligand contact to substrate; sequence VA. Mg(2+) is bound by residues aspartate 237, glutamate 250, and asparagine 252. 256–260 provides a ligand contact to substrate; the sequence is EFKGF. Residues 259 to 260 carry the GF motif that is essential for ArgX substrate specificity motif; that stretch reads GF.

This sequence belongs to the RimK family. LysX subfamily. In terms of assembly, homotetramer. Interacts with LysW. It depends on Mg(2+) as a cofactor.

It catalyses the reaction [amino-group carrier protein]-C-terminal-L-glutamate + L-glutamate + ATP = [amino-group carrier protein]-C-terminal-gamma-(L-glutamyl)-L-glutamate + ADP + phosphate + H(+). Its pathway is amino-acid biosynthesis; L-arginine biosynthesis. Catalyzes the ATP-dependent formation of a covalent bond between the amino group of glutamate and the gamma-carboxyl group of the C-terminal glutamate residue in LysW. The polypeptide is Glutamate--LysW ligase ArgX (Sulfurisphaera tokodaii (strain DSM 16993 / JCM 10545 / NBRC 100140 / 7) (Sulfolobus tokodaii)).